The chain runs to 233 residues: Orotidine 5'-phosphate decarboxylase (233 aa).

Substrate is bound by residues aspartate 10, lysine 32, 60–69, threonine 115, arginine 176, glutamine 185, glycine 205, and arginine 206; that span reads DLKLHDIPAT. The Proton donor role is filled by lysine 62.

The protein belongs to the OMP decarboxylase family. Type 1 subfamily. Homodimer.

The enzyme catalyses orotidine 5'-phosphate + H(+) = UMP + CO2. The protein operates within pyrimidine metabolism; UMP biosynthesis via de novo pathway; UMP from orotate: step 2/2. Its function is as follows. Catalyzes the decarboxylation of orotidine 5'-monophosphate (OMP) to uridine 5'-monophosphate (UMP). The chain is Orotidine 5'-phosphate decarboxylase from Thermobifida fusca (strain YX).